Reading from the N-terminus, the 300-residue chain is N-acetylmuramic acid 6-phosphate etherase 2 (300 aa).

The region spanning 57–220 (ITAAFANGGR…TTGAMIRSGK (164 aa)) is the SIS domain. The active-site Proton donor is the Glu-85. Glu-116 is a catalytic residue.

This sequence belongs to the GCKR-like family. MurNAc-6-P etherase subfamily. Homodimer.

It catalyses the reaction N-acetyl-D-muramate 6-phosphate + H2O = N-acetyl-D-glucosamine 6-phosphate + (R)-lactate. It functions in the pathway amino-sugar metabolism; 1,6-anhydro-N-acetylmuramate degradation. Its pathway is amino-sugar metabolism; N-acetylmuramate degradation. The protein operates within cell wall biogenesis; peptidoglycan recycling. Specifically catalyzes the cleavage of the D-lactyl ether substituent of MurNAc 6-phosphate, producing GlcNAc 6-phosphate and D-lactate. Together with AnmK, is also required for the utilization of anhydro-N-acetylmuramic acid (anhMurNAc) either imported from the medium or derived from its own cell wall murein, and thus plays a role in cell wall recycling. In Vibrio parahaemolyticus serotype O3:K6 (strain RIMD 2210633), this protein is N-acetylmuramic acid 6-phosphate etherase 2.